We begin with the raw amino-acid sequence, 556 residues long: Fiber protein (556 aa).

The interval Met1–Tyr22 is disordered.

The protein belongs to the adenoviridae fiber family. In terms of assembly, homotrimer. Interacts with host receptor CXCAR. Interacts (via N-terminal tail region) with pentons.

The protein localises to the virion. Its subcellular location is the host nucleus. In terms of biological role, forms spikes that protrude from each vertex of the icosahedral capsid. Interacts with host receptor CXCAR to provide virion initial attachment to target cell. Fiber proteins are shed during virus entry, when virus is still at the cell surface. In Human adenovirus A serotype 31 (HAdV-31), this protein is Fiber protein.